The chain runs to 258 residues: Adenylate kinase (258 aa).

Residue 52–57 (GAGKGT) coordinates ATP. An NMP region spans residues 72–101 (ATGDMLRSQVAKKTALGKEAKKIMDQGGLV). AMP contacts are provided by residues Thr73, Arg78, 99–101 (GLV), 128–131 (GFPR), and Gln135. An LID region spans residues 169 to 206 (GRLVHPASGRSYHKIFNPPKEEMKDDVTGEPLIQRSDD). Residues Arg170 and 179–180 (SY) each bind ATP. Residues Arg203 and Arg214 each contribute to the AMP site. Position 242 (Gln242) interacts with ATP.

The protein belongs to the adenylate kinase family. AK2 subfamily. In terms of assembly, monomer.

It is found in the cytoplasm. The protein localises to the cytosol. Its subcellular location is the mitochondrion intermembrane space. The catalysed reaction is AMP + ATP = 2 ADP. In terms of biological role, catalyzes the reversible transfer of the terminal phosphate group between ATP and AMP. Plays an important role in cellular energy homeostasis and in adenine nucleotide metabolism. Adenylate kinase activity is critical for regulation of the phosphate utilization and the AMP de novo biosynthesis pathways. The sequence is that of Adenylate kinase (adk1) from Aspergillus niger (strain ATCC MYA-4892 / CBS 513.88 / FGSC A1513).